Reading from the N-terminus, the 464-residue chain is Soluble pyridine nucleotide transhydrogenase (464 aa).

Residue 35-44 (DSRRQVGGNC) coordinates FAD.

Belongs to the class-I pyridine nucleotide-disulfide oxidoreductase family. Requires FAD as cofactor.

It is found in the cytoplasm. It carries out the reaction NAD(+) + NADPH = NADH + NADP(+). Conversion of NADPH, generated by peripheral catabolic pathways, to NADH, which can enter the respiratory chain for energy generation. This chain is Soluble pyridine nucleotide transhydrogenase, found in Pseudomonas savastanoi pv. phaseolicola (strain 1448A / Race 6) (Pseudomonas syringae pv. phaseolicola (strain 1448A / Race 6)).